The following is a 171-amino-acid chain: Probable chorismate pyruvate-lyase (171 aa).

The substrate site is built by Met36, Arg78, Leu116, and Glu157.

Belongs to the UbiC family.

The protein localises to the cytoplasm. It catalyses the reaction chorismate = 4-hydroxybenzoate + pyruvate. It participates in cofactor biosynthesis; ubiquinone biosynthesis. Removes the pyruvyl group from chorismate, with concomitant aromatization of the ring, to provide 4-hydroxybenzoate (4HB) for the ubiquinone pathway. The chain is Probable chorismate pyruvate-lyase from Bartonella bacilliformis (strain ATCC 35685 / KC583 / Herrer 020/F12,63).